A 119-amino-acid polypeptide reads, in one-letter code: Protein Wnt-4 (119 aa).

Residue serine 1 is the site of O-palmitoleoyl serine; by PORCN attachment. Disulfide bonds link cysteine 69/cysteine 100 and cysteine 85/cysteine 95. Asparagine 86 is a glycosylation site (N-linked (GlcNAc...) asparagine).

It belongs to the Wnt family. Post-translationally, palmitoleoylation is required for efficient binding to frizzled receptors. Depalmitoleoylation leads to Wnt signaling pathway inhibition.

It is found in the secreted. Its subcellular location is the extracellular space. The protein resides in the extracellular matrix. Ligand for members of the frizzled family of seven transmembrane receptors. Plays an important role in embryonic development. The protein is Protein Wnt-4 (WNT4) of Meleagris gallopavo (Wild turkey).